A 447-amino-acid chain; its full sequence is Phosphatidylinositol N-acetylglucosaminyltransferase subunit A (447 aa).

Residues 1-387 (MAEPPKLRVL…NRSLLERLMR (387 aa)) are Cytoplasmic-facing. Residues 388–408 (FLSCGAWAGKLFCMVMILDYL) form a helical membrane-spanning segment. Over 409–447 (LWRLLQLLQPDEDIEEAPDICLCHHRGVEVSEGLRKKIK) the chain is Lumenal.

It belongs to the glycosyltransferase group 1 family. Glycosyltransferase 4 subfamily. In terms of tissue distribution, expressed in roots, stems, leaves, flowers and pollen grains.

It localises to the endoplasmic reticulum membrane. The enzyme catalyses a 1,2-diacyl-sn-glycero-3-phospho-(1D-myo-inositol) + UDP-N-acetyl-alpha-D-glucosamine = a 6-(N-acetyl-alpha-D-glucosaminyl)-1-(1,2-diacyl-sn-glycero-3-phospho)-1D-myo-inositol + UDP + H(+). It participates in glycolipid biosynthesis; glycosylphosphatidylinositol-anchor biosynthesis. Its function is as follows. Necessary for the synthesis of N-acetylglucosaminyl-phosphatidylinositol, the very early intermediate in GPI-anchor biosynthesis. Required for pollen germination and pollen tube growth. The chain is Phosphatidylinositol N-acetylglucosaminyltransferase subunit A from Arabidopsis thaliana (Mouse-ear cress).